The sequence spans 339 residues: Anthranilate phosphoribosyltransferase (339 aa).

5-phospho-alpha-D-ribose 1-diphosphate contacts are provided by residues Gly-81, 84–85, Thr-89, 91–94, 109–117, and Ala-121; these read GD, NIST, and KHGNRNLSS. Gly-81 is an anthranilate binding site. Residue Ser-93 coordinates Mg(2+). Asn-112 contributes to the anthranilate binding site. Arg-167 is an anthranilate binding site. The Mg(2+) site is built by Asp-226 and Glu-227.

The protein belongs to the anthranilate phosphoribosyltransferase family. As to quaternary structure, homodimer. Mg(2+) serves as cofactor.

It carries out the reaction N-(5-phospho-beta-D-ribosyl)anthranilate + diphosphate = 5-phospho-alpha-D-ribose 1-diphosphate + anthranilate. It functions in the pathway amino-acid biosynthesis; L-tryptophan biosynthesis; L-tryptophan from chorismate: step 2/5. Catalyzes the transfer of the phosphoribosyl group of 5-phosphorylribose-1-pyrophosphate (PRPP) to anthranilate to yield N-(5'-phosphoribosyl)-anthranilate (PRA). This Roseobacter denitrificans (strain ATCC 33942 / OCh 114) (Erythrobacter sp. (strain OCh 114)) protein is Anthranilate phosphoribosyltransferase.